The chain runs to 596 residues: Sphingomyelinase C 1 (596 aa).

An N-terminal signal peptide occupies residues 1–36 (MITKRNIPCKKNWKYKKKSISLTLITICYMFLFLTS). Residues 63–118 (KIEDSTNTDPSSNVNEEDENSINANANDNAPSDSDSSNPRSPDKNPVNPTSPNSSS) form a disordered region. The segment covering 67-76 (STNTDPSSNV) has biased composition (polar residues). Over residues 83-118 (SINANANDNAPSDSDSSNPRSPDKNPVNPTSPNSSS) the composition is skewed to low complexity.

Its subcellular location is the secreted. It catalyses the reaction a sphingomyelin + H2O = phosphocholine + an N-acylsphing-4-enine + H(+). The polypeptide is Sphingomyelinase C 1 (sph1) (Leptospira interrogans serogroup Icterohaemorrhagiae serovar copenhageni (strain Fiocruz L1-130)).